The following is a 694-amino-acid chain: 4-alpha-glucanotransferase (694 aa).

This sequence belongs to the disproportionating enzyme family.

The protein resides in the cytoplasm. It catalyses the reaction Transfers a segment of a (1-&gt;4)-alpha-D-glucan to a new position in an acceptor, which may be glucose or a (1-&gt;4)-alpha-D-glucan.. This chain is 4-alpha-glucanotransferase (malQ), found in Escherichia coli (strain K12).